The sequence spans 620 residues: Dihydroxy-acid dehydratase (620 aa).

Asp-82 is a binding site for Mg(2+). Cys-123 provides a ligand contact to [2Fe-2S] cluster. Positions 124 and 125 each coordinate Mg(2+). Lys-125 is modified (N6-carboxylysine). A [2Fe-2S] cluster-binding site is contributed by Cys-197. Glu-493 contributes to the Mg(2+) binding site. The Proton acceptor role is filled by Ser-519.

This sequence belongs to the IlvD/Edd family. As to quaternary structure, homodimer. Requires [2Fe-2S] cluster as cofactor. The cofactor is Mg(2+).

It carries out the reaction (2R)-2,3-dihydroxy-3-methylbutanoate = 3-methyl-2-oxobutanoate + H2O. The enzyme catalyses (2R,3R)-2,3-dihydroxy-3-methylpentanoate = (S)-3-methyl-2-oxopentanoate + H2O. Its pathway is amino-acid biosynthesis; L-isoleucine biosynthesis; L-isoleucine from 2-oxobutanoate: step 3/4. The protein operates within amino-acid biosynthesis; L-valine biosynthesis; L-valine from pyruvate: step 3/4. In terms of biological role, functions in the biosynthesis of branched-chain amino acids. Catalyzes the dehydration of (2R,3R)-2,3-dihydroxy-3-methylpentanoate (2,3-dihydroxy-3-methylvalerate) into 2-oxo-3-methylpentanoate (2-oxo-3-methylvalerate) and of (2R)-2,3-dihydroxy-3-methylbutanoate (2,3-dihydroxyisovalerate) into 2-oxo-3-methylbutanoate (2-oxoisovalerate), the penultimate precursor to L-isoleucine and L-valine, respectively. This Bifidobacterium longum subsp. infantis (strain ATCC 15697 / DSM 20088 / JCM 1222 / NCTC 11817 / S12) protein is Dihydroxy-acid dehydratase.